The following is a 435-amino-acid chain: F-box/FBD/LRR-repeat protein At5g44980 (435 aa).

Residues 3 to 49 (RDYISELPDSLLTQILLELRTKDSVKTSVLSKRWRNLWLNVPGLELF) form the F-box domain. LRR repeat units lie at residues 88-114 (CKGY…YVFM), 138-162 (LHNV…KLEN), 165-190 (HGED…ELIR), 191-217 (PFDI…TLHF), 250-275 (VKNL…DLRM), and 324-349 (MWSS…ILEY). In terms of domain architecture, FBD spans 355–405 (REQVDFTNVPQCLISTLEYVEIKEPNEKSTIKLVNYFLENSAVLKKLTLRF).

This chain is F-box/FBD/LRR-repeat protein At5g44980, found in Arabidopsis thaliana (Mouse-ear cress).